The sequence spans 519 residues: Mannuronan C5-epimerase (519 aa).

The first 25 residues, 1-25 (MNLHPHLRHSLLASALLLASGLATA), serve as a signal peptide directing secretion. PbH1 repeat units follow at residues 219-246 (GTET…SISQ), 281-303 (TQDF…DPHD), 305-328 (SHRL…IVSR), 330-352 (VNDS…VIDR), 354-376 (SVNN…TLYE), and 377-399 (SGDN…RVRN). The active-site Proton acceptor is the H302.

It belongs to the D-mannuronate C5-epimerase family.

The protein resides in the periplasm. It carries out the reaction [(1-&gt;4)-beta-D-mannuronosyl](n) = [alginate](n). The protein operates within glycan biosynthesis; alginate biosynthesis. In terms of biological role, catalyzes the epimerization of beta-D-mannuronate to alpha-L-guluronate during the synthesis of the linear polysaccharide alginate. In addition, is part of a periplasmic protein complex that protects alginate from degradation by AlgL by channeling the newly formed alginate polymer through a scaffold that transfers the alginate polymer through the periplasmic space to the outer membrane secretin AlgE. The protein is Mannuronan C5-epimerase (algG) of Pseudomonas putida (strain ATCC 47054 / DSM 6125 / CFBP 8728 / NCIMB 11950 / KT2440).